The following is a 272-amino-acid chain: Tryptophan synthase alpha chain (272 aa).

Residues E49 and D60 each act as proton acceptor in the active site.

The protein belongs to the TrpA family. As to quaternary structure, tetramer of two alpha and two beta chains.

It carries out the reaction (1S,2R)-1-C-(indol-3-yl)glycerol 3-phosphate + L-serine = D-glyceraldehyde 3-phosphate + L-tryptophan + H2O. It participates in amino-acid biosynthesis; L-tryptophan biosynthesis; L-tryptophan from chorismate: step 5/5. Its function is as follows. The alpha subunit is responsible for the aldol cleavage of indoleglycerol phosphate to indole and glyceraldehyde 3-phosphate. The polypeptide is Tryptophan synthase alpha chain (Acidithiobacillus ferrooxidans (strain ATCC 23270 / DSM 14882 / CIP 104768 / NCIMB 8455) (Ferrobacillus ferrooxidans (strain ATCC 23270))).